Reading from the N-terminus, the 357-residue chain is Cobalt-precorrin-5B C(1)-methyltransferase (357 aa).

It belongs to the CbiD family.

It carries out the reaction Co-precorrin-5B + S-adenosyl-L-methionine = Co-precorrin-6A + S-adenosyl-L-homocysteine. Its pathway is cofactor biosynthesis; adenosylcobalamin biosynthesis; cob(II)yrinate a,c-diamide from sirohydrochlorin (anaerobic route): step 6/10. Its function is as follows. Catalyzes the methylation of C-1 in cobalt-precorrin-5B to form cobalt-precorrin-6A. In Gloeobacter violaceus (strain ATCC 29082 / PCC 7421), this protein is Cobalt-precorrin-5B C(1)-methyltransferase.